A 969-amino-acid chain; its full sequence is Vacuolar membrane protease (969 aa).

Over 1–12 (MTRVNSIIGFRP) the chain is Cytoplasmic. A helical membrane pass occupies residues 13-33 (IPVTLLTVITYVSLFSALLFI). The Vacuolar portion of the chain corresponds to 34-381 (DRQPPAVAKK…RAFSVLHLHT (348 aa)). Residue N125 is glycosylated (N-linked (GlcNAc...) asparagine). The Zn(2+) site is built by H166 and D178. E216 (proton acceptor) is an active-site residue. Zn(2+)-binding residues include E217, E242, and H315. A glycan (N-linked (GlcNAc...) asparagine) is linked at N355. A helical membrane pass occupies residues 382-402 (IFAFTITLIVVPFVVVLVAMW). Residues 403–438 (ALGHFDKLYFFSNTAYIPPPPEHSIASRTTQGWRGV) lie on the Cytoplasmic side of the membrane. The chain crosses the membrane as a helical span at residues 439-459 (LRFPVAFVAASAGVVGMAFLI). Topologically, residues 460–469 (NKINPMVVYA) are vacuolar. The helical transmembrane segment at 470-490 (SQYTVWTCFLSTWWIIAWVIL) threads the bilayer. The Cytoplasmic portion of the chain corresponds to 491-505 (RGADAVRPTALARGY). Residues 506-526 (GFLEQWLLWLVAMIGVAISIG) form a helical membrane-spanning segment. Residues 527 to 531 (KSHLG) are Vacuolar-facing. Residues 532 to 552 (SGYWVLVFYSGFFTSAFISLL) form a helical membrane-spanning segment. The Cytoplasmic portion of the chain corresponds to 553-662 (EMAALQKKSE…WSKDLPSWTW (110 aa)). Residues 571-629 (DQAYPPEEHSQTGASGNISNRAANDDDDAGEHATEETPLFRGPNRPLSFAPHRNPRYDN) are disordered. Positions 581-592 (QTGASGNISNRA) are enriched in polar residues. The chain crosses the membrane as a helical span at residues 663–683 (ILQFLATVPLQLVLAGSVALL). Residues 684-698 (LGNALAQTGADGSDM) lie on the Vacuolar side of the membrane. A helical membrane pass occupies residues 699–719 (LTVLLGFGVFSIILLLPVAPF). Topologically, residues 720–727 (LHRITYHV) are cytoplasmic. Residues 728–748 (TLFIFVIFVGTFIYNLAAPPF) traverse the membrane as a helical segment. Residues 749–969 (SPNARLKVYF…LVEGSVPFMI (221 aa)) are Vacuolar-facing. A glycan (N-linked (GlcNAc...) asparagine) is linked at N840.

The protein belongs to the peptidase M28 family. The cofactor is Zn(2+).

The protein resides in the vacuole membrane. In terms of biological role, may be involved in vacuolar sorting and osmoregulation. The protein is Vacuolar membrane protease of Tuber melanosporum (strain Mel28) (Perigord black truffle).